We begin with the raw amino-acid sequence, 406 residues long: COP9 signalosome complex subunit 4 (406 aa).

A2 is modified (N-acetylalanine). K25 carries the post-translational modification N6-acetyllysine. The PCI domain maps to 197–366 (YRRKFIEAAQ…GIVHFETREA (170 aa)).

The protein belongs to the CSN4 family. In terms of assembly, component of the CSN complex, composed of COPS1/GPS1, COPS2, COPS3, COPS4, COPS5, COPS6, COPS7 (COPS7A or COPS7B), COPS8 and COPS9. In the complex, it probably interacts directly with COPS1, COPS2, COPS3, COPS5, COPS6, COPS7 (COPS7A or COPS7B) and COPS8. Interacts with TOR1A; the interaction is direct and associates TOR1A and SNAPIN with the CSN complex. Interacts with STON2; controls STON2 neddylation levels. Interacts with ERCC6.

Its subcellular location is the cytoplasm. The protein resides in the nucleus. It is found in the cytoplasmic vesicle. The protein localises to the secretory vesicle. It localises to the synaptic vesicle. Component of the COP9 signalosome complex (CSN), a complex involved in various cellular and developmental processes. The CSN complex is an essential regulator of the ubiquitin (Ubl) conjugation pathway by mediating the deneddylation of the cullin subunits of SCF-type E3 ligase complexes, leading to decrease the Ubl ligase activity of SCF-type complexes such as SCF, CSA or DDB2. Also involved in the deneddylation of non-cullin subunits such as STON2. The complex is also involved in phosphorylation of p53/TP53, c-jun/JUN, IkappaBalpha/NFKBIA, ITPK1, IRF8/ICSBP and SNAPIN, possibly via its association with CK2 and PKD kinases. CSN-dependent phosphorylation of TP53 and JUN promotes and protects degradation by the Ubl system, respectively. The chain is COP9 signalosome complex subunit 4 (Cops4) from Rattus norvegicus (Rat).